A 506-amino-acid polypeptide reads, in one-letter code: Lysine--tRNA ligase (506 aa).

Residues glutamate 416 and glutamate 423 each contribute to the Mg(2+) site.

This sequence belongs to the class-II aminoacyl-tRNA synthetase family. As to quaternary structure, homodimer. Requires Mg(2+) as cofactor.

It localises to the cytoplasm. It carries out the reaction tRNA(Lys) + L-lysine + ATP = L-lysyl-tRNA(Lys) + AMP + diphosphate. This is Lysine--tRNA ligase from Pelotomaculum thermopropionicum (strain DSM 13744 / JCM 10971 / SI).